The following is a 188-amino-acid chain: Elongation factor P (188 aa).

It belongs to the elongation factor P family.

It is found in the cytoplasm. It participates in protein biosynthesis; polypeptide chain elongation. Involved in peptide bond synthesis. Stimulates efficient translation and peptide-bond synthesis on native or reconstituted 70S ribosomes in vitro. Probably functions indirectly by altering the affinity of the ribosome for aminoacyl-tRNA, thus increasing their reactivity as acceptors for peptidyl transferase. The protein is Elongation factor P of Phenylobacterium zucineum (strain HLK1).